The chain runs to 1118 residues: Isoleucine--tRNA ligase (1118 aa).

Residues 64 to 74 (PFANGLPHYGH) carry the 'HIGH' region motif. The 'KMSKS' region signature appears at 647 to 651 (KLSKR). Residue Lys650 participates in ATP binding.

Belongs to the class-I aminoacyl-tRNA synthetase family. IleS type 2 subfamily. As to quaternary structure, monomer. Zn(2+) serves as cofactor.

It is found in the cytoplasm. The catalysed reaction is tRNA(Ile) + L-isoleucine + ATP = L-isoleucyl-tRNA(Ile) + AMP + diphosphate. In terms of biological role, catalyzes the attachment of isoleucine to tRNA(Ile). As IleRS can inadvertently accommodate and process structurally similar amino acids such as valine, to avoid such errors it has two additional distinct tRNA(Ile)-dependent editing activities. One activity is designated as 'pretransfer' editing and involves the hydrolysis of activated Val-AMP. The other activity is designated 'posttransfer' editing and involves deacylation of mischarged Val-tRNA(Ile). The sequence is that of Isoleucine--tRNA ligase from Ehrlichia ruminantium (strain Gardel).